Consider the following 74-residue polypeptide: UPF0235 protein tsr1994 (74 aa).

This sequence belongs to the UPF0235 family.

In Thermosynechococcus vestitus (strain NIES-2133 / IAM M-273 / BP-1), this protein is UPF0235 protein tsr1994.